Here is a 151-residue protein sequence, read N- to C-terminus: MAQTIYVLNGPNLNLLGTREPEIYGRATLADVEKLCAETAAGFGLIAVCRQSNHEGQLIDWIHQARSEKVAGLVINAGGYTHTSIALHDALVGVQIPTVEVHVSNVFAREDFRHHSFIAKAAFASLCGFGIDGYRLAITGLAAKLGASATA.

The active-site Proton acceptor is the Tyr-24. Substrate-binding residues include Asn-76, His-82, and Asp-89. His-102 acts as the Proton donor in catalysis. Substrate-binding positions include 103–104 and Arg-113; that span reads VS.

This sequence belongs to the type-II 3-dehydroquinase family. In terms of assembly, homododecamer.

The catalysed reaction is 3-dehydroquinate = 3-dehydroshikimate + H2O. Its pathway is metabolic intermediate biosynthesis; chorismate biosynthesis; chorismate from D-erythrose 4-phosphate and phosphoenolpyruvate: step 3/7. Its function is as follows. Catalyzes a trans-dehydration via an enolate intermediate. The protein is 3-dehydroquinate dehydratase of Rhodopseudomonas palustris (strain ATCC BAA-98 / CGA009).